The chain runs to 383 residues: PqqA peptide cyclase (383 aa).

One can recognise a Radical SAM core domain in the interval 11 to 226 (PGPPLWLLAE…TNQWREKLAA (216 aa)). Positions 25, 29, and 32 each coordinate [4Fe-4S] cluster.

It belongs to the radical SAM superfamily. PqqE family. Interacts with PqqD. The interaction is necessary for activity of PqqE. The cofactor is [4Fe-4S] cluster.

It carries out the reaction [PQQ precursor protein] + S-adenosyl-L-methionine = E-Y cross-linked-[PQQ precursor protein] + 5'-deoxyadenosine + L-methionine + H(+). It participates in cofactor biosynthesis; pyrroloquinoline quinone biosynthesis. Catalyzes the cross-linking of a glutamate residue and a tyrosine residue in the PqqA protein as part of the biosynthesis of pyrroloquinoline quinone (PQQ). The sequence is that of PqqA peptide cyclase from Azotobacter vinelandii (strain DJ / ATCC BAA-1303).